The chain runs to 108 residues: CDGSH iron-sulfur domain-containing protein 1 (108 aa).

The helical; Signal-anchor for type III membrane protein transmembrane segment at 13–31 threads the bilayer; that stretch reads WIAAVTFAAGTAALGYLAY. The Cytoplasmic portion of the chain corresponds to 32–108; it reads KKFYAKESRT…GPLIIKKKET (77 aa). K42 participates in a covalent cross-link: Glycyl lysine isopeptide (Lys-Gly) (interchain with G-Cter in ubiquitin). K55 (schiff-base intermediate with pyridoxal 5'-phosphate) is an active-site residue. 2 positions are modified to N6-acetyllysine; alternate: K55 and K68. Residues K55 and K68 each participate in a glycyl lysine isopeptide (Lys-Gly) (interchain with G-Cter in ubiquitin); alternate cross-link. 2 residues coordinate [2Fe-2S] cluster: C72 and C74. Glycyl lysine isopeptide (Lys-Gly) (interchain with G-Cter in ubiquitin) cross-links involve residues K78 and K79. Positions 83 and 87 each coordinate [2Fe-2S] cluster. A Glycyl lysine isopeptide (Lys-Gly) (interchain with G-Cter in ubiquitin) cross-link involves residue K89. K104 carries the N6-acetyllysine; alternate modification. Residue K104 forms a Glycyl lysine isopeptide (Lys-Gly) (interchain with G-Cter in ubiquitin); alternate linkage. Glycyl lysine isopeptide (Lys-Gly) (interchain with G-Cter in ubiquitin) cross-links involve residues K105 and K106.

It belongs to the CISD protein family. As to quaternary structure, homodimer. [2Fe-2S] cluster is required as a cofactor. It depends on pyridoxal 5'-phosphate as a cofactor. Ubiquitinated by PRKN during mitophagy, leading to its degradation and enhancement of mitophagy. Deubiquitinated by USP30.

The protein localises to the mitochondrion outer membrane. The enzyme catalyses L-cysteine + 2-oxoglutarate = 2-oxo-3-sulfanylpropanoate + L-glutamate. L-cysteine transaminase that catalyzes the reversible transfer of the amino group from L-cysteine to the alpha-keto acid 2-oxoglutarate to respectively form 2-oxo-3-sulfanylpropanoate and L-glutamate. The catalytic cycle occurs in the presence of pyridoxal 5'-phosphate (PLP) cofactor that facilitates transamination by initially forming an internal aldimine with the epsilon-amino group of active site Lys-55 residue on the enzyme (PLP-enzyme aldimine), subsequently displaced by formation of an external aldimine with the substrate amino group (PLP-L-cysteine aldimine). The external aldimine is further deprotonated to form a carbanion intermediate, which in the presence of 2-oxoglutarate regenerates PLP yielding final products 2-oxo-3-sulfanylpropanoate and L-glutamate. The proton transfer in carbanion intermediate is suggested to be controlled by the active site lysine residue, whereas PLP stabilizes carbanion structure through electron delocalization, also known as the electron sink effect. Plays a key role in regulating maximal capacity for electron transport and oxidative phosphorylation. May be involved in iron-sulfur cluster shuttling and/or in redox reactions. Can transfer the [2Fe-2S] cluster to an apo-acceptor protein only when in the oxidation state, likely serving as a redox sensor that regulates mitochondrial iron-sulfur cluster assembly and iron trafficking upon oxidative stress. The protein is CDGSH iron-sulfur domain-containing protein 1 (Cisd1) of Rattus norvegicus (Rat).